The following is a 63-amino-acid chain: Kurtoxin-like II (63 aa).

Positions 2–62 constitute an LCN-type CS-alpha/beta domain; that stretch reads IDGYPVDYWN…ARIKRSGRCR (61 aa). Intrachain disulfides connect C12–C61, C16–C37, C23–C44, and C27–C46.

This sequence belongs to the long (4 C-C) scorpion toxin superfamily. Sodium channel inhibitor family. Alpha subfamily. In terms of tissue distribution, expressed by the venom gland.

The protein resides in the secreted. Its function is as follows. This neurotoxin acts on sodium and calcium channels. Potently inhibits native voltage-gated T-type calcium channel activity in mouse male germ cells. Also binds Cav3.1/CACNA1G, Cav3.2/CACNA1H, and Cav3.3/CACNA1I T-type calcium channels and inhibits the channels by modifying voltage-dependent gating. In addition, binds and significantly inhibits the inactivation of activated sodium channels (Nav1.2/SCN2A and Nav1.5/SCN5A). The sequence is that of Kurtoxin-like II from Parabuthus granulatus (Granulated thick-tailed scorpion).